A 120-amino-acid chain; its full sequence is Protein EPIDERMAL PATTERNING FACTOR 2 (120 aa).

The first 25 residues, 1–25 (MTKFVRKYMFCLVLVFAACSLVVNS), serve as a signal peptide directing secretion. Intrachain disulfides connect Cys76-Cys107, Cys80-Cys86, Cys83-Cys109, and Cys95-Cys101.

Belongs to the plant cysteine rich small secretory peptide family. Epidermal patterning factor subfamily. In terms of assembly, interacts with ERECTA, ERL1 and TMM. As to expression, expressed in leaves, especially by the MMCs and their early descendants cells (stomatal lineage cells) including guard mother cells (GMCs).

It is found in the secreted. In terms of biological role, controls stomatal patterning. Regulates the number of cells that enter, and remain in, the stomatal lineage by inhibiting protodermal cells from adopting the meristemoid mother cell (MMC) fate in a non-cell-autonomous manner. Mediates stomatal development inhibition. MEPF2: mobile signal controlling stomatal development in a non-cell-autonomous manner. Uses ERECTA as major receptor. Inactivated by cleavage by CRSP (AC Q9LNU1). May act by competing with somatogen (AC Q9SV72) for the same receptor, TMM (AC Q9SSD1). The polypeptide is Protein EPIDERMAL PATTERNING FACTOR 2 (Arabidopsis thaliana (Mouse-ear cress)).